The sequence spans 959 residues: rDNA transcriptional regulator pol5 (959 aa).

2 positions are modified to phosphoserine: S742 and S743. The tract at residues 936–959 (HQQTSTAASSPQKTGHHENEKTNH) is disordered. Positions 937-948 (QQTSTAASSPQK) are enriched in polar residues. Residues 950–959 (GHHENEKTNH) show a composition bias toward basic and acidic residues.

This sequence belongs to the MYBBP1A family. As to quaternary structure, interacts with cdc10.

The protein localises to the nucleus. In terms of biological role, plays an important role in the regulation of rRNA transcription. Binds to rDNA promoter fragments. This Schizosaccharomyces pombe (strain 972 / ATCC 24843) (Fission yeast) protein is rDNA transcriptional regulator pol5 (pol5).